The primary structure comprises 49 residues: Light-harvesting protein B-875 beta chain (49 aa).

The Cytoplasmic segment spans residues 2-27 (ADKSDLGYTGLTDEQAQELHSVYMSG). A bacteriochlorophyll-binding residues include histidine 21 and histidine 39. Residues 28-45 (LWPFSAVAIVAHLAVYIW) form a helical; Signal-anchor for type II membrane protein membrane-spanning segment. Residues 46 to 49 (RPWF) are Periplasmic-facing.

Belongs to the antenna complex beta subunit family. As to quaternary structure, the core complex is formed by different alpha and beta chains, binding bacteriochlorophyll molecules, and arranged most probably in tetrameric structures disposed around the reaction center. The non-pigmented gamma chains may constitute additional components.

The protein localises to the cell inner membrane. Antenna complexes are light-harvesting systems, which transfer the excitation energy to the reaction centers. This chain is Light-harvesting protein B-875 beta chain (pufB), found in Cereibacter sphaeroides (Rhodobacter sphaeroides).